Consider the following 284-residue polypeptide: 2-dehydro-3-deoxyphosphooctonate aldolase (284 aa).

This sequence belongs to the KdsA family.

The protein localises to the cytoplasm. It carries out the reaction D-arabinose 5-phosphate + phosphoenolpyruvate + H2O = 3-deoxy-alpha-D-manno-2-octulosonate-8-phosphate + phosphate. Its pathway is carbohydrate biosynthesis; 3-deoxy-D-manno-octulosonate biosynthesis; 3-deoxy-D-manno-octulosonate from D-ribulose 5-phosphate: step 2/3. It participates in bacterial outer membrane biogenesis; lipopolysaccharide biosynthesis. This is 2-dehydro-3-deoxyphosphooctonate aldolase from Mannheimia succiniciproducens (strain KCTC 0769BP / MBEL55E).